Here is a 278-residue protein sequence, read N- to C-terminus: Pantothenate synthetase (278 aa).

27-34 (MGYLHEGH) serves as a coordination point for ATP. Residue His-34 is the Proton donor of the active site. Gln-58 serves as a coordination point for (R)-pantoate. Gln-58 provides a ligand contact to beta-alanine. 144-147 (GQKD) provides a ligand contact to ATP. Gln-150 lines the (R)-pantoate pocket. ATP is bound by residues Val-173 and 181–184 (MSSR).

It belongs to the pantothenate synthetase family. In terms of assembly, homodimer.

Its subcellular location is the cytoplasm. The enzyme catalyses (R)-pantoate + beta-alanine + ATP = (R)-pantothenate + AMP + diphosphate + H(+). Its pathway is cofactor biosynthesis; (R)-pantothenate biosynthesis; (R)-pantothenate from (R)-pantoate and beta-alanine: step 1/1. In terms of biological role, catalyzes the condensation of pantoate with beta-alanine in an ATP-dependent reaction via a pantoyl-adenylate intermediate. This chain is Pantothenate synthetase, found in Roseiflexus sp. (strain RS-1).